The following is a 677-amino-acid chain: DNA ligase (677 aa).

NAD(+) is bound by residues D32–D36, S81–L82, and E112. The active-site N6-AMP-lysine intermediate is K114. 4 residues coordinate NAD(+): R135, E171, K288, and K312. C416, C419, C434, and C439 together coordinate Zn(2+). One can recognise a BRCT domain in the interval Y598–S677.

It belongs to the NAD-dependent DNA ligase family. LigA subfamily. Mg(2+) serves as cofactor. The cofactor is Mn(2+).

It carries out the reaction NAD(+) + (deoxyribonucleotide)n-3'-hydroxyl + 5'-phospho-(deoxyribonucleotide)m = (deoxyribonucleotide)n+m + AMP + beta-nicotinamide D-nucleotide.. In terms of biological role, DNA ligase that catalyzes the formation of phosphodiester linkages between 5'-phosphoryl and 3'-hydroxyl groups in double-stranded DNA using NAD as a coenzyme and as the energy source for the reaction. It is essential for DNA replication and repair of damaged DNA. The protein is DNA ligase of Dehalococcoides mccartyi (strain ATCC BAA-2266 / KCTC 15142 / 195) (Dehalococcoides ethenogenes (strain 195)).